Reading from the N-terminus, the 477-residue chain is Bifunctional protein HldE (477 aa).

Positions 1–319 (MTVIFPNFSK…NIMNSHICTT (319 aa)) are ribokinase. 195–198 (NISE) provides a ligand contact to ATP. The active site involves aspartate 264. The tract at residues 346 to 477 (MTNGVFDILH…NIINAIKRKN (132 aa)) is cytidylyltransferase.

In the N-terminal section; belongs to the carbohydrate kinase PfkB family. The protein in the C-terminal section; belongs to the cytidylyltransferase family. As to quaternary structure, homodimer.

It catalyses the reaction D-glycero-beta-D-manno-heptose 7-phosphate + ATP = D-glycero-beta-D-manno-heptose 1,7-bisphosphate + ADP + H(+). The catalysed reaction is D-glycero-beta-D-manno-heptose 1-phosphate + ATP + H(+) = ADP-D-glycero-beta-D-manno-heptose + diphosphate. The protein operates within nucleotide-sugar biosynthesis; ADP-L-glycero-beta-D-manno-heptose biosynthesis; ADP-L-glycero-beta-D-manno-heptose from D-glycero-beta-D-manno-heptose 7-phosphate: step 1/4. It functions in the pathway nucleotide-sugar biosynthesis; ADP-L-glycero-beta-D-manno-heptose biosynthesis; ADP-L-glycero-beta-D-manno-heptose from D-glycero-beta-D-manno-heptose 7-phosphate: step 3/4. Catalyzes the phosphorylation of D-glycero-D-manno-heptose 7-phosphate at the C-1 position to selectively form D-glycero-beta-D-manno-heptose-1,7-bisphosphate. Functionally, catalyzes the ADP transfer from ATP to D-glycero-beta-D-manno-heptose 1-phosphate, yielding ADP-D-glycero-beta-D-manno-heptose. This Blochmanniella pennsylvanica (strain BPEN) protein is Bifunctional protein HldE.